The following is a 149-amino-acid chain: Glycine cleavage system H protein (149 aa).

Residues Leu23–Asn104 enclose the Lipoyl-binding domain. Lys64 carries the N6-lipoyllysine modification.

It belongs to the GcvH family. The glycine cleavage system is composed of four proteins: P, T, L and H. (R)-lipoate serves as cofactor.

Its function is as follows. The glycine cleavage system catalyzes the degradation of glycine. The H protein shuttles the methylamine group of glycine from the P protein to the T protein. In Polynucleobacter necessarius subsp. necessarius (strain STIR1), this protein is Glycine cleavage system H protein.